Consider the following 262-residue polypeptide: MSGTNRVAANLNMLFTNLPLLQRYGAAASAGFKLVEVSIPYTEPAEKLREAADEYHLKHTLINAPPGNWDDGFRGLASLKSAKKEFRKSLDTAIEYAKALGCCRVHVMAGIPKSDDDLENAHQTYSENVRFAAEKFKEHKLICLIEPINKYTIPGYHLNNYEDAMDVIQMDQSNNLKIQYDTFHAQQINGQIGAIMRKLKDYIGYIQVAQVPNRGACDTRGEIDYHFIFDEIRSINPSWVIGAEYLDAKPSFNWIENMSLSF.

Active-site proton donor/acceptor residues include Glu-146 and Glu-244.

Belongs to the hyi family.

The catalysed reaction is 3-hydroxypyruvate = 2-hydroxy-3-oxopropanoate. Catalyzes the reversible isomerization between hydroxypyruvate and 2-hydroxy-3-oxopropanoate (also termed tartronate semialdehyde). The chain is Putative hydroxypyruvate isomerase from Caenorhabditis elegans.